The following is a 190-amino-acid chain: Threonylcarbamoyl-AMP synthase (190 aa).

The YrdC-like domain maps to 7-190 (LGSIAQAVDV…ALTGERFRQG (184 aa)).

Belongs to the SUA5 family. TsaC subfamily.

It localises to the cytoplasm. It carries out the reaction L-threonine + hydrogencarbonate + ATP = L-threonylcarbamoyladenylate + diphosphate + H2O. Its function is as follows. Required for the formation of a threonylcarbamoyl group on adenosine at position 37 (t(6)A37) in tRNAs that read codons beginning with adenine. Catalyzes the conversion of L-threonine, HCO(3)(-)/CO(2) and ATP to give threonylcarbamoyl-AMP (TC-AMP) as the acyladenylate intermediate, with the release of diphosphate. The protein is Threonylcarbamoyl-AMP synthase of Enterobacter sp. (strain 638).